The primary structure comprises 633 residues: Probable extracellular metalloproteinase 5 (633 aa).

A signal peptide spans 1-20; sequence MHGLLLAAAGLLSLPLHVLA. A propeptide spanning residues 21–244 is cleaved from the precursor; the sequence is HPQPSTNLAG…VHNVVDYVSH (224 aa). A glycan (N-linked (GlcNAc...) asparagine) is linked at Asn285. His428 is a binding site for Zn(2+). Residue Glu429 is part of the active site. Residue His432 coordinates Zn(2+). N-linked (GlcNAc...) asparagine glycosylation is found at Asn592 and Asn621.

This sequence belongs to the peptidase M36 family. Zn(2+) serves as cofactor.

It is found in the secreted. Its function is as follows. Secreted metalloproteinase probably acting as a virulence factor. This Trichophyton verrucosum (strain HKI 0517) protein is Probable extracellular metalloproteinase 5 (MEP5).